The following is a 442-amino-acid chain: Thymidine phosphorylase (442 aa).

Belongs to the thymidine/pyrimidine-nucleoside phosphorylase family. Homodimer.

It catalyses the reaction thymidine + phosphate = 2-deoxy-alpha-D-ribose 1-phosphate + thymine. It participates in pyrimidine metabolism; dTMP biosynthesis via salvage pathway; dTMP from thymine: step 1/2. The enzymes which catalyze the reversible phosphorolysis of pyrimidine nucleosides are involved in the degradation of these compounds and in their utilization as carbon and energy sources, or in the rescue of pyrimidine bases for nucleotide synthesis. This Vibrio parahaemolyticus serotype O3:K6 (strain RIMD 2210633) protein is Thymidine phosphorylase.